A 372-amino-acid polypeptide reads, in one-letter code: Methylthioribose-1-phosphate isomerase 2 (372 aa).

D254 serves as the catalytic Proton donor.

The protein belongs to the eIF-2B alpha/beta/delta subunits family. MtnA subfamily.

The protein localises to the cytoplasm. It localises to the nucleus. The enzyme catalyses 5-(methylsulfanyl)-alpha-D-ribose 1-phosphate = 5-(methylsulfanyl)-D-ribulose 1-phosphate. The protein operates within amino-acid biosynthesis; L-methionine biosynthesis via salvage pathway; L-methionine from S-methyl-5-thio-alpha-D-ribose 1-phosphate: step 1/6. Its function is as follows. Catalyzes the interconversion of methylthioribose-1-phosphate (MTR-1-P) into methylthioribulose-1-phosphate (MTRu-1-P). This Trypanosoma cruzi (strain CL Brener) protein is Methylthioribose-1-phosphate isomerase 2.